The sequence spans 186 residues: Protein GrpE (186 aa).

Over residues 1–15 (MADEQQTLDQQTPEQ) the composition is skewed to polar residues. A disordered region spans residues 1-20 (MADEQQTLDQQTPEQPTGAA).

It belongs to the GrpE family. In terms of assembly, homodimer.

The protein resides in the cytoplasm. Functionally, participates actively in the response to hyperosmotic and heat shock by preventing the aggregation of stress-denatured proteins, in association with DnaK and GrpE. It is the nucleotide exchange factor for DnaK and may function as a thermosensor. Unfolded proteins bind initially to DnaJ; upon interaction with the DnaJ-bound protein, DnaK hydrolyzes its bound ATP, resulting in the formation of a stable complex. GrpE releases ADP from DnaK; ATP binding to DnaK triggers the release of the substrate protein, thus completing the reaction cycle. Several rounds of ATP-dependent interactions between DnaJ, DnaK and GrpE are required for fully efficient folding. The protein is Protein GrpE of Pseudomonas aeruginosa (strain LESB58).